The primary structure comprises 464 residues: Protein VAPYRIN-LIKE (464 aa).

Residues 3-124 (RLVKTEFNEV…RDAVITVILV (122 aa)) form the MSP domain. ANK repeat units lie at residues 153–182 (NLTN…DVNF), 186–215 (NGKS…RIND), 217–246 (VDFV…ELDV), 252–281 (EMMT…NANA), 285–314 (RRWT…VKYA), 318–347 (NGKT…LLQA), 349–368 (RVDD…EVNR), 372–401 (NGWT…EVDS), and 405–435 (AGYT…QTNL).

Expressed in roots.

It localises to the cytoplasm. The protein resides in the nucleus. The protein localises to the cell membrane. In terms of biological role, may be involved in arbuscular mycorrhizal (AM) symbiosis with AM fungi and in nitrogen-fixing rhizobial bacteria symbiosis leading to the formation of root nodules. This Medicago truncatula (Barrel medic) protein is Protein VAPYRIN-LIKE.